Consider the following 315-residue polypeptide: GTP cyclohydrolase MptA 1 (315 aa).

The protein belongs to the GTP cyclohydrolase IV family. In terms of assembly, homodimer. Fe(2+) serves as cofactor.

The enzyme catalyses GTP + H2O = 7,8-dihydroneopterin 2',3'-cyclic phosphate + formate + diphosphate + H(+). Its pathway is cofactor biosynthesis; 5,6,7,8-tetrahydromethanopterin biosynthesis. Converts GTP to 7,8-dihydro-D-neopterin 2',3'-cyclic phosphate, the first intermediate in the biosynthesis of coenzyme methanopterin. In Methanocella arvoryzae (strain DSM 22066 / NBRC 105507 / MRE50), this protein is GTP cyclohydrolase MptA 1.